A 485-amino-acid chain; its full sequence is uncharacterized protein (485 aa).

Positions 151-201 (IKAPTNNSQSGDGNGGTNNDNLLGTFDIREKSNGKKGESNGKQGNGQDKKT) are disordered. Over residues 155–174 (TNNSQSGDGNGGTNNDNLLG) the composition is skewed to low complexity. A compositionally biased stretch (basic and acidic residues) spans 177–189 (DIREKSNGKKGES).

It belongs to the MG185/MG260 family.

This is an uncharacterized protein from Mycoplasma pneumoniae (strain ATCC 29342 / M129 / Subtype 1) (Mycoplasmoides pneumoniae).